Here is a 252-residue protein sequence, read N- to C-terminus: 5-oxoprolinase subunit A 1 (252 aa).

This sequence belongs to the LamB/PxpA family. In terms of assembly, forms a complex composed of PxpA, PxpB and PxpC.

The enzyme catalyses 5-oxo-L-proline + ATP + 2 H2O = L-glutamate + ADP + phosphate + H(+). Catalyzes the cleavage of 5-oxoproline to form L-glutamate coupled to the hydrolysis of ATP to ADP and inorganic phosphate. In Bordetella bronchiseptica (strain ATCC BAA-588 / NCTC 13252 / RB50) (Alcaligenes bronchisepticus), this protein is 5-oxoprolinase subunit A 1.